The sequence spans 68 residues: uncharacterized protein (68 aa).

This is an uncharacterized protein from Escherichia coli O6:H1 (strain CFT073 / ATCC 700928 / UPEC).